The primary structure comprises 147 residues: Putative HTH-type transcriptional regulator slr0846 (147 aa).

Residues 2 to 130 enclose the HTH rrf2-type domain; sequence KLTTKSHYSV…YSITLADLYY (129 aa).

The protein is Putative HTH-type transcriptional regulator slr0846 of Synechocystis sp. (strain ATCC 27184 / PCC 6803 / Kazusa).